Reading from the N-terminus, the 196-residue chain is 3-isopropylmalate dehydratase small subunit (196 aa).

Belongs to the LeuD family. LeuD type 1 subfamily. Heterodimer of LeuC and LeuD.

The catalysed reaction is (2R,3S)-3-isopropylmalate = (2S)-2-isopropylmalate. The protein operates within amino-acid biosynthesis; L-leucine biosynthesis; L-leucine from 3-methyl-2-oxobutanoate: step 2/4. In terms of biological role, catalyzes the isomerization between 2-isopropylmalate and 3-isopropylmalate, via the formation of 2-isopropylmaleate. This chain is 3-isopropylmalate dehydratase small subunit, found in Corynebacterium aurimucosum (strain ATCC 700975 / DSM 44827 / CIP 107346 / CN-1) (Corynebacterium nigricans).